A 199-amino-acid chain; its full sequence is Elongation factor Ts (199 aa).

The interval 80–83 is involved in Mg(2+) ion dislocation from EF-Tu; it reads TDFV.

It belongs to the EF-Ts family.

The protein localises to the cytoplasm. Functionally, associates with the EF-Tu.GDP complex and induces the exchange of GDP to GTP. It remains bound to the aminoacyl-tRNA.EF-Tu.GTP complex up to the GTP hydrolysis stage on the ribosome. The sequence is that of Elongation factor Ts from Thermodesulfovibrio yellowstonii (strain ATCC 51303 / DSM 11347 / YP87).